A 166-amino-acid chain; its full sequence is MSNAHAQAGLATLDSSMAERLPSVSQTLFSAKAATGITFEDMAKELGRSEVAVAGMFYGQVQASAEDVVKLSQLLQVSQESLAPLMAFPNRGHAGPMPPVEPLIYRLYEVVQNYGYAFKAVMNEKFGDGIMSAIAFNTKVEKEVDEAGNPWVVITLKGKWLPFTRF.

Active-site residues include R106, E109, and S132.

Belongs to the cyanase family.

The enzyme catalyses cyanate + hydrogencarbonate + 3 H(+) = NH4(+) + 2 CO2. Functionally, catalyzes the reaction of cyanate with bicarbonate to produce ammonia and carbon dioxide. In Verticillium alfalfae (strain VaMs.102 / ATCC MYA-4576 / FGSC 10136) (Verticillium wilt of alfalfa), this protein is Cyanate hydratase.